Reading from the N-terminus, the 170-residue chain is Adenine phosphoribosyltransferase (170 aa).

It belongs to the purine/pyrimidine phosphoribosyltransferase family. Homodimer.

It localises to the cytoplasm. It catalyses the reaction AMP + diphosphate = 5-phospho-alpha-D-ribose 1-diphosphate + adenine. It functions in the pathway purine metabolism; AMP biosynthesis via salvage pathway; AMP from adenine: step 1/1. Catalyzes a salvage reaction resulting in the formation of AMP, that is energically less costly than de novo synthesis. The sequence is that of Adenine phosphoribosyltransferase from Thermosynechococcus vestitus (strain NIES-2133 / IAM M-273 / BP-1).